The chain runs to 392 residues: Stilbene synthase 4 (392 aa).

A substrate-binding site is contributed by Lys55–Arg58. Residue Cys164 is part of the active site. Substrate contacts are provided by residues Leu267 and Gly305–Pro307.

The protein belongs to the thiolase-like superfamily. Chalcone/stilbene synthases family. Homodimer.

The protein localises to the cytoplasm. It catalyses the reaction 4-coumaroyl-CoA + 3 malonyl-CoA + 3 H(+) = trans-resveratrol + 4 CO2 + 4 CoA. The protein operates within phytoalexin biosynthesis; 3,4',5-trihydroxystilbene biosynthesis; 3,4',5-trihydroxystilbene from trans-4-coumarate: step 2/2. Mediates resistance to pathogens which are sensitive to stilbenes. In Vitis vinifera (Grape), this protein is Stilbene synthase 4.